An 88-amino-acid chain; its full sequence is Apolipoprotein C-I (88 aa).

The signal sequence occupies residues 1 to 26 (MRLILSLPVLAVVLAMVLEGPAPAQA).

This sequence belongs to the apolipoprotein C1 family.

The protein localises to the secreted. Inhibitor of lipoprotein binding to the low density lipoprotein (LDL) receptor, LDL receptor-related protein, and very low density lipoprotein (VLDL) receptor. Associates with high density lipoproteins (HDL) and the triacylglycerol-rich lipoproteins in the plasma and makes up about 10% of the protein of the VLDL and 2% of that of HDL. Appears to interfere directly with fatty acid uptake and is also the major plasma inhibitor of cholesteryl ester transfer protein (CETP). Binds free fatty acids and reduces their intracellular esterification. Modulates the interaction of APOE with beta-migrating VLDL and inhibits binding of beta-VLDL to the LDL receptor-related protein. The chain is Apolipoprotein C-I (APOC1) from Eidolon helvum (Straw-colored fruit bat).